The following is a 474-amino-acid chain: Bifunctional protein HldE (474 aa).

A ribokinase region spans residues 1 to 318 (MKVTLPDFNK…ENAIRGRADN (318 aa)). 195–198 (NMSE) is a binding site for ATP. D264 is a catalytic residue. A cytidylyltransferase region spans residues 344–474 (MTNGCFDILH…TNIINAIKKK (131 aa)).

This sequence in the N-terminal section; belongs to the carbohydrate kinase PfkB family. It in the C-terminal section; belongs to the cytidylyltransferase family. As to quaternary structure, homodimer.

The catalysed reaction is D-glycero-beta-D-manno-heptose 7-phosphate + ATP = D-glycero-beta-D-manno-heptose 1,7-bisphosphate + ADP + H(+). It catalyses the reaction D-glycero-beta-D-manno-heptose 1-phosphate + ATP + H(+) = ADP-D-glycero-beta-D-manno-heptose + diphosphate. It participates in nucleotide-sugar biosynthesis; ADP-L-glycero-beta-D-manno-heptose biosynthesis; ADP-L-glycero-beta-D-manno-heptose from D-glycero-beta-D-manno-heptose 7-phosphate: step 1/4. Its pathway is nucleotide-sugar biosynthesis; ADP-L-glycero-beta-D-manno-heptose biosynthesis; ADP-L-glycero-beta-D-manno-heptose from D-glycero-beta-D-manno-heptose 7-phosphate: step 3/4. Its function is as follows. Catalyzes the phosphorylation of D-glycero-D-manno-heptose 7-phosphate at the C-1 position to selectively form D-glycero-beta-D-manno-heptose-1,7-bisphosphate. Catalyzes the ADP transfer from ATP to D-glycero-beta-D-manno-heptose 1-phosphate, yielding ADP-D-glycero-beta-D-manno-heptose. The protein is Bifunctional protein HldE of Proteus mirabilis (strain HI4320).